Here is a 470-residue protein sequence, read N- to C-terminus: Uronate isomerase (470 aa).

It belongs to the metallo-dependent hydrolases superfamily. Uronate isomerase family.

The enzyme catalyses D-glucuronate = D-fructuronate. The catalysed reaction is aldehydo-D-galacturonate = keto-D-tagaturonate. It functions in the pathway carbohydrate metabolism; pentose and glucuronate interconversion. The sequence is that of Uronate isomerase from Vibrio vulnificus (strain CMCP6).